The following is a 306-amino-acid chain: UDP-N-acetylenolpyruvoylglucosamine reductase (306 aa).

The FAD-binding PCMH-type domain occupies 34 to 198; sequence VGGPADLLIT…LEVTFKLHNS (165 aa). Arg177 is a catalytic residue. The active-site Proton donor is the Ser227. Glu297 is an active-site residue.

This sequence belongs to the MurB family. Requires FAD as cofactor.

It is found in the cytoplasm. It catalyses the reaction UDP-N-acetyl-alpha-D-muramate + NADP(+) = UDP-N-acetyl-3-O-(1-carboxyvinyl)-alpha-D-glucosamine + NADPH + H(+). It functions in the pathway cell wall biogenesis; peptidoglycan biosynthesis. In terms of biological role, cell wall formation. The polypeptide is UDP-N-acetylenolpyruvoylglucosamine reductase (Clostridium botulinum (strain 657 / Type Ba4)).